A 528-amino-acid chain; its full sequence is Protein spinster homolog 1 (528 aa).

A disordered region spans residues 1–38 (MAGSDTAPFLSQADDPDDGPAPGHPGLPGPMGNPKSGE). An N-acetylalanine modification is found at A2. The next 12 membrane-spanning stretches (helical) occupy residues 60-80 (LIVVVLCYINLLNYMDRFTVA), 98-118 (GLIQTVFISSYMVLAPVFGYL), 126-146 (YLMCGGIAFWSLVTLGSSFIP), 160-180 (VGVGEASYSTIAPTLIADLFV), 187-207 (MLSIFYFAIPVGSGLGYIAGS), 218-238 (WALRVTPGLGVLAVLLLFLVV), 278-298 (LGFTSVAFVTGSLALWAPAFL), 323-343 (LIFGLITCLTGVLGVGLGVEI), 357-377 (LVCAAGLLGSAPFLFLALACA), 381-401 (IVATYIFIFIGETLLSMNWAI), 421-441 (FQIVLSHLLGDAGSPYLIGLI), and 465-485 (MLCAFVGALGGAAFLGTAMFI). S518 carries the post-translational modification Phosphoserine.

This sequence belongs to the major facilitator superfamily. Spinster (TC 2.A.1.49) family. In terms of assembly, interacts with BCL2 and BCL2L1. In terms of tissue distribution, expressed in liver (at mRNA and protein levels).

The protein resides in the lysosome membrane. The catalysed reaction is a 1-acyl-sn-glycero-3-phosphocholine(out) + H(+)(out) = a 1-acyl-sn-glycero-3-phosphocholine(in) + H(+)(in). It carries out the reaction 1-hexadecanoyl-sn-glycero-3-phosphocholine(out) + H(+)(out) = 1-hexadecanoyl-sn-glycero-3-phosphocholine(in) + H(+)(in). It catalyses the reaction 1-(9Z-octadecenoyl)-sn-glycero-3-phosphocholine(out) + H(+)(out) = 1-(9Z-octadecenoyl)-sn-glycero-3-phosphocholine(in) + H(+)(in). The enzyme catalyses 1-(5Z,8Z,11Z,14Z-eicosatetraenoyl)-sn-glycero-3-phosphocholine(out) + H(+)(out) = 1-(5Z,8Z,11Z,14Z-eicosatetraenoyl)-sn-glycero-3-phosphocholine(in) + H(+)(in). The catalysed reaction is 1-(4Z,7Z,10Z,13Z,16Z,19Z-docosahexaenoyl)-sn-glycero-3-phosphocholine(out) + H(+)(out) = 1-(4Z,7Z,10Z,13Z,16Z,19Z-docosahexaenoyl)-sn-glycero-3-phosphocholine(in) + H(+)(in). It carries out the reaction a 1-acyl-sn-glycero-3-phosphoethanolamine(out) + H(+)(out) = a 1-acyl-sn-glycero-3-phosphoethanolamine(in) + H(+)(in). It catalyses the reaction 1-(9Z-octadecenoyl)-sn-glycero-3-phosphoethanolamine(out) + H(+)(out) = 1-(9Z-octadecenoyl)-sn-glycero-3-phosphoethanolamine(in) + H(+)(in). The enzyme catalyses 1-acyl-sn-glycero-3-phospho-(1'-sn-glycerol)(out) + H(+)(out) = 1-acyl-sn-glycero-3-phospho-(1'-sn-glycerol)(in) + H(+)(in). The catalysed reaction is 1-(9Z-octadecenoyl)-sn-glycero-3-phospho-(1'-sn-glycerol)(out) + H(+)(out) = 1-(9Z-octadecenoyl)-sn-glycero-3-phospho-(1'-sn-glycerol)(in) + H(+)(in). It carries out the reaction a 1-O-(1Z-alkenyl)-sn-glycero-3-phosphocholine(out) + H(+)(out) = a 1-O-(1Z-alkenyl)-sn-glycero-3-phosphocholine(in) + H(+)(in). It catalyses the reaction 1-(1Z-hexadecenyl)-sn-glycero-3-phosphocholine(out) + H(+)(out) = 1-(1Z-hexadecenyl)-sn-glycero-3-phosphocholine(in) + H(+)(in). The enzyme catalyses a 1-O-(1Z-alkenyl)-sn-glycero-3-phosphoethanolamine(out) + H(+)(out) = a 1-O-(1Z-alkenyl)-sn-glycero-3-phosphoethanolamine(in) + H(+)(in). The catalysed reaction is 1-O-(1Z-hexadecenyl)-sn-glycero-3-phosphoethanolamine(out) + H(+)(out) = 1-O-(1Z-hexadecenyl)-sn-glycero-3-phosphoethanolamine(in) + H(+)(in). Functionally, plays a critical role in the phospholipid salvage pathway from lysosomes to the cytosol. Mediates the rate-limiting, proton-dependent, lysosomal efflux of lysophospholipids, which can then be reacylated by acyltransferases in the endoplasmic reticulum to form phospholipids. Selective for zwitterionic headgroups such as lysophosphatidylcholine (LPC) and lysophosphatidylethanolamine (LPE), can also transport lysophosphatidylglycerol (LPG), but not other anionic lysophospholipids, sphingosine, nor sphingomyelin. Transports lysophospholipids with saturated, monounsaturated, and polyunsaturated fatty acids, such as 1-hexadecanoyl-sn-glycero-3-phosphocholine, 1-(9Z-octadecenoyl)-sn-glycero-3-phosphocholine and 1-(4Z,7Z,10Z,13Z,16Z,19Z-docosahexaenoyl)-sn-glycero-3-phosphocholine, respectively. Can also transport lysoplasmalogen (LPC with a fatty alcohol) such as 1-(1Z-hexadecenyl)-sn-glycero-3-phosphocholine. Essential player in lysosomal homeostasis. Crucial for cell survival under conditions of nutrient limitation. May be involved in necrotic or autophagic cell death. This Mus musculus (Mouse) protein is Protein spinster homolog 1 (Spns1).